A 281-amino-acid polypeptide reads, in one-letter code: Proteasome subunit beta 2 (281 aa).

A propeptide spans 1 to 53 (MEANTRSTGRLPAAFLTPGSSSFMDFLSEHQPEILPGNRQLPPTQGVIEAPHG) (removed in mature form; by autocatalysis). Threonine 54 functions as the Nucleophile in the catalytic mechanism.

Belongs to the peptidase T1B family. The 20S proteasome core is composed of 14 alpha and 14 beta subunits that assemble into four stacked heptameric rings, resulting in a barrel-shaped structure. The two inner rings, each composed of seven catalytic beta subunits, are sandwiched by two outer rings, each composed of seven alpha subunits. The catalytic chamber with the active sites is on the inside of the barrel. Has a gated structure, the ends of the cylinder being occluded by the N-termini of the alpha-subunits. Is capped by the proteasome-associated ATPase, ARC.

The protein localises to the cytoplasm. The enzyme catalyses Cleavage of peptide bonds with very broad specificity.. The protein operates within protein degradation; proteasomal Pup-dependent pathway. The formation of the proteasomal ATPase ARC-20S proteasome complex, likely via the docking of the C-termini of ARC into the intersubunit pockets in the alpha-rings, may trigger opening of the gate for substrate entry. Interconversion between the open-gate and close-gate conformations leads to a dynamic regulation of the 20S proteasome proteolysis activity. In terms of biological role, component of the proteasome core, a large protease complex with broad specificity involved in protein degradation. This is Proteasome subunit beta 2 from Streptomyces avermitilis (strain ATCC 31267 / DSM 46492 / JCM 5070 / NBRC 14893 / NCIMB 12804 / NRRL 8165 / MA-4680).